A 257-amino-acid chain; its full sequence is uncharacterized protein (257 aa).

The N-terminal stretch at 1–22 is a signal peptide; the sequence is MGYLKRFALYISVMILMFAIAG. Cys-23 carries the N-palmitoyl cysteine lipid modification. Residue Cys-23 is the site of S-diacylglycerol cysteine attachment.

This sequence belongs to the staphylococcal tandem lipoprotein family.

It localises to the cell membrane. This is an uncharacterized protein from Staphylococcus aureus (strain MRSA252).